We begin with the raw amino-acid sequence, 311 residues long: Homeobox-leucine zipper protein HOX1 (311 aa).

Disordered regions lie at residues 29 to 69 (AGGA…SDHR) and 97 to 160 (AETT…KKLR). Low complexity predominate over residues 119–145 (SSPNSTLSSLSGKRGAPSAATAAAAAA). Positions 154–213 (GSRKKLRLSKDQAAVLEDTFKEHNTLNPKQKAALARQLNLKPRQVEVWFQNRRARTKLKQ) form a DNA-binding region, homeobox. The leucine-zipper stretch occupies residues 212–256 (KQTEVDCELLKRCCETLTDENRRLHRELQELRALKLATAAAAPHH). Residues 279–311 (SAATTTRNNSGAAPARPVPTRPWPPAAAQRSSA) are disordered. Positions 280 to 289 (AATTTRNNSG) are enriched in polar residues. Residues 294-303 (RPVPTRPWPP) show a composition bias toward pro residues.

Belongs to the HD-ZIP homeobox family. Class II subfamily. As to quaternary structure, homodimer. May form a heterodimer with HOX2, HOX3 or HOX7. Expressed in root provascular and vascular cylinder, provascular and vascular strands of leaves, provascular and vascular strands of the whole panicle, in mature embryo provascular bundles of scutellum and embryonic axis and provascular and vascular strands of young immature spikelet organs. Expressed in differentiating and differentiated xylem and phloem elements, and in outer and inner bundle sheath cells of all vascular bundles. Expressed in auricles, ligules, culm, guard cells brac hairs and pollen.

The protein localises to the nucleus. Functionally, probable transcription repressor involved leaf development. Binds to the DNA sequence 5'-CAAT[GC]ATTG-3'. May act as a regulatory switch to specify provascular cell fate. The sequence is that of Homeobox-leucine zipper protein HOX1 (HOX1) from Oryza sativa subsp. japonica (Rice).